Consider the following 336-residue polypeptide: Phenylalanine--tRNA ligase alpha subunit (336 aa).

E259 contacts Mg(2+).

This sequence belongs to the class-II aminoacyl-tRNA synthetase family. Phe-tRNA synthetase alpha subunit type 1 subfamily. As to quaternary structure, tetramer of two alpha and two beta subunits. Requires Mg(2+) as cofactor.

The protein localises to the cytoplasm. The enzyme catalyses tRNA(Phe) + L-phenylalanine + ATP = L-phenylalanyl-tRNA(Phe) + AMP + diphosphate + H(+). The polypeptide is Phenylalanine--tRNA ligase alpha subunit (Tropheryma whipplei (strain TW08/27) (Whipple's bacillus)).